A 514-amino-acid polypeptide reads, in one-letter code: 2,3-bisphosphoglycerate-independent phosphoglycerate mutase (514 aa).

Residues Asp14 and Ser64 each contribute to the Mn(2+) site. The active-site Phosphoserine intermediate is Ser64. Substrate contacts are provided by residues His125, 155–156 (RD), Arg187, Arg193, 263–266 (RADR), and Lys336. Residues Asp403, His407, Asp444, His445, and His463 each contribute to the Mn(2+) site.

It belongs to the BPG-independent phosphoglycerate mutase family. In terms of assembly, monomer. Mn(2+) is required as a cofactor.

It catalyses the reaction (2R)-2-phosphoglycerate = (2R)-3-phosphoglycerate. Its pathway is carbohydrate degradation; glycolysis; pyruvate from D-glyceraldehyde 3-phosphate: step 3/5. In terms of biological role, catalyzes the interconversion of 2-phosphoglycerate and 3-phosphoglycerate. The chain is 2,3-bisphosphoglycerate-independent phosphoglycerate mutase from Shewanella sp. (strain W3-18-1).